A 375-amino-acid polypeptide reads, in one-letter code: MDFDSISRESTFLSPLLNQNAMWQMNLGSDDTMGVDGSYPERHGEPDCAYYIRTGLCRFGSTCRFNHPHDRKLVIATARIKGEYPERIGQPECEFYLKTGTCKFGVTCKFHHPRNKAGIDGSVSVNVLSYPLRPNEDDCSYFLRIGQCKFGGTCKFNHPQTQSTNLMVSVRGSPVYSALQSLTGQPSYSWSRTSFVANPPRLQDPSGFASGSQGGLFSSGFHSGNSVPLGFYALPRENVFPERPGQPECQFYMKTGDCKFGTVCKFHHPRDRQTPPPDCVLSSVGLPLRPGEPLCVFYSRYGICKFGPSCKFDHPMRVFTYNNNTASPSPSSSLHQETAITTELRNLLVSSSVEAKPTSLPETTSAKDTIVDAQH.

C3H1-type zinc fingers lie at residues 42 to 70 (RHGEPDCAYYIRTGLCRFGSTCRFNHPHD), 87 to 115 (RIGQPECEFYLKTGTCKFGVTCKFHHPRN), 133 to 161 (RPNEDDCSYFLRIGQCKFGGTCKFNHPQT), 243 to 271 (RPGQPECQFYMKTGDCKFGTVCKFHHPRD), and 289 to 317 (RPGEPLCVFYSRYGICKFGPSCKFDHPMR). The disordered stretch occupies residues 352–375 (SVEAKPTSLPETTSAKDTIVDAQH).

It localises to the nucleus. The protein is Zinc finger CCCH domain-containing protein 57 (ZFN3) of Arabidopsis thaliana (Mouse-ear cress).